A 478-amino-acid polypeptide reads, in one-letter code: tRNA(Ile)-lysidine synthase (478 aa).

27 to 32 is a binding site for ATP; that stretch reads SGGSDS.

This sequence belongs to the tRNA(Ile)-lysidine synthase family.

It is found in the cytoplasm. The enzyme catalyses cytidine(34) in tRNA(Ile2) + L-lysine + ATP = lysidine(34) in tRNA(Ile2) + AMP + diphosphate + H(+). Functionally, ligates lysine onto the cytidine present at position 34 of the AUA codon-specific tRNA(Ile) that contains the anticodon CAU, in an ATP-dependent manner. Cytidine is converted to lysidine, thus changing the amino acid specificity of the tRNA from methionine to isoleucine. The protein is tRNA(Ile)-lysidine synthase of Rickettsia conorii (strain ATCC VR-613 / Malish 7).